Consider the following 346-residue polypeptide: L-threonine dehydratase catabolic TdcB (346 aa).

Position 59 to 60 (59 to 60 (FT)) interacts with AMP. K64 carries the post-translational modification N6-(pyridoxal phosphate)lysine. Residues Q94, 125 to 126 (GY), and N321 each bind AMP.

Belongs to the serine/threonine dehydratase family. In the native structure, TdcB is in a dimeric form, whereas in the TdcB-AMP complex, it exists in a tetrameric form (dimer of dimers). The cofactor is pyridoxal 5'-phosphate.

It catalyses the reaction L-threonine = 2-oxobutanoate + NH4(+). Its pathway is amino-acid degradation; L-threonine degradation via propanoate pathway; propanoate from L-threonine: step 1/4. With respect to regulation, each protein molecule can bind up to four molecules of AMP, which act as an allosteric activator to the enzyme. Its function is as follows. Catalyzes the anaerobic formation of alpha-ketobutyrate and ammonia from threonine in a two-step reaction. The first step involved a dehydration of threonine and a production of enamine intermediates (aminocrotonate), which tautomerizes to its imine form (iminobutyrate). Both intermediates are unstable and short-lived. The second step is the nonenzymatic hydrolysis of the enamine/imine intermediates to form 2-ketobutyrate and free ammonia. In the low water environment of the cell, the second step is accelerated by RidA. This chain is L-threonine dehydratase catabolic TdcB (tdcB), found in Staphylococcus aureus (strain Mu50 / ATCC 700699).